The sequence spans 1051 residues: MQETFKFLRCNSQGEAVEDKYSLETLKNHFVVRDEYNNLFRVFSSRDDFWEWEAAQPFEQKCFHEVVFGFLPQRLKFDIDFPVNKSYSNDNVDENVDDNVNDDDNVYDILDMIINVIMDVFYETYSLPYNINLTREQILLTDSIGLNKKRELKYSFHIILYTHSVLNNNEAKAFTSKVLENLPKHVYPFVDPQVNKSIQNFRIIGSHKKGSMRVKMFNEELADVFETSTTTKKSDTLIATPFETTCLPCIFTNVKETASSSCDTIQQSELEEVLKFAGTLCKNHCFLRVHKNLVLFKRTSPSYCEICKRMHDKDNTLILRVTGNKVYQHCRHDNKHSLLMGSLSGTNNFVETYVDQVMTKSIEVHESILFEELPDPQKHIYDESSMREYERVPTLVVKAQMKIGKTIQLRNYLQKYYGNNSISKQQTIRFVTFRQIFSKNIQSRLPNFTLYSEVTGDLDSYERVIIQVESLFRLTSTAEPVDLLILDEVESIFNQFNSGLHKYFAPSFAIFMWMLETANYVICLDANLGNRTYNILQRFRGDVPIFFHWNQYKRAQHDMYYFTSSRETWLNNLLKDLLEDKKIVIPTNSLMEARLLQSFIQKKFPEKKIGFYSSKSTAHERESHFNNVSYYWGLVDILIYTPTISAGVSYEDKRFDVLYGFFNNMSCDVETCCQMLGRVRELKSKCYKICLQGKQNYFPETIEDIEMFTLQKRDTLFQTISNHQLSFTYSKETGRPIYYKTPYYHLWLETMRIQHLSKNHFITRFINQIADTGAKVFILTGEKLETVKQYTSIKMEIKHQDYVNIASAETIDANKALLIKQNLKEGITVDQQDLFAYEKYKLLEFYAWHGHKITPKFVEQYNSFMTKQNYTGRVQISRGKTVYESLTMLQTQELNFHQWAMQHAEHHDLQYNYSFQSHMYAIMLLTKCGFKCVQDPNILTNEQLMAKLVDEFVQYDLSAVSFEFKLKKPNKTDPQTILKFINKVLGLRYGLKIHHNKGNYYIKNTKAGSLIPFVRQQIKQSPCVVSNLLPITETSSVKEETSPIKETLTET.

The protein belongs to the asfivirus F1055L family.

In terms of biological role, may be involved in DNA replication. The polypeptide is Putative helicase/primase complex protein (Ornithodoros (relapsing fever ticks)).